The following is a 660-amino-acid chain: UvrABC system protein B (660 aa).

The Helicase ATP-binding domain maps to 27-414 (NGVNEGKRHQ…TDEMVQQIIR (388 aa)). 40 to 47 (GATGTGKT) contacts ATP. Residues 93-116 (YYDYYQPEAYVPSTDTFIEKDASI) carry the Beta-hairpin motif. One can recognise a Helicase C-terminal domain in the interval 431-593 (QIDDLLGEIQ…ITPTTINKKI (163 aa)). The segment at 603 to 622 (NDETNEQQQTEVPKKMTKKE) is disordered. Positions 624–659 (EKTIANIEKEMKQAAKDLDFEKATELRDMLFELKAE) constitute a UVR domain.

The protein belongs to the UvrB family. Forms a heterotetramer with UvrA during the search for lesions. Interacts with UvrC in an incision complex.

The protein localises to the cytoplasm. Functionally, the UvrABC repair system catalyzes the recognition and processing of DNA lesions. A damage recognition complex composed of 2 UvrA and 2 UvrB subunits scans DNA for abnormalities. Upon binding of the UvrA(2)B(2) complex to a putative damaged site, the DNA wraps around one UvrB monomer. DNA wrap is dependent on ATP binding by UvrB and probably causes local melting of the DNA helix, facilitating insertion of UvrB beta-hairpin between the DNA strands. Then UvrB probes one DNA strand for the presence of a lesion. If a lesion is found the UvrA subunits dissociate and the UvrB-DNA preincision complex is formed. This complex is subsequently bound by UvrC and the second UvrB is released. If no lesion is found, the DNA wraps around the other UvrB subunit that will check the other stand for damage. This Staphylococcus saprophyticus subsp. saprophyticus (strain ATCC 15305 / DSM 20229 / NCIMB 8711 / NCTC 7292 / S-41) protein is UvrABC system protein B.